A 618-amino-acid polypeptide reads, in one-letter code: 1-deoxy-D-xylulose-5-phosphate synthase (618 aa).

Thiamine diphosphate-binding positions include His74 and 115–117 (GHS). Asp146 contributes to the Mg(2+) binding site. Thiamine diphosphate is bound by residues 147–148 (GA), Asn175, Tyr286, and Glu366. Asn175 is a Mg(2+) binding site.

It belongs to the transketolase family. DXPS subfamily. In terms of assembly, homodimer. Requires Mg(2+) as cofactor. Thiamine diphosphate is required as a cofactor.

The catalysed reaction is D-glyceraldehyde 3-phosphate + pyruvate + H(+) = 1-deoxy-D-xylulose 5-phosphate + CO2. It participates in metabolic intermediate biosynthesis; 1-deoxy-D-xylulose 5-phosphate biosynthesis; 1-deoxy-D-xylulose 5-phosphate from D-glyceraldehyde 3-phosphate and pyruvate: step 1/1. In terms of biological role, catalyzes the acyloin condensation reaction between C atoms 2 and 3 of pyruvate and glyceraldehyde 3-phosphate to yield 1-deoxy-D-xylulose-5-phosphate (DXP). This is 1-deoxy-D-xylulose-5-phosphate synthase from Clostridium tetani (strain Massachusetts / E88).